The primary structure comprises 93 residues: Auxin-responsive protein SAUR26 (93 aa).

It belongs to the ARG7 family. Interacts with PP2C-D1. Higher expression in thermo-responsive cultivars (e.g. cv. Alst-1, cv. Ang-0 and cv. Com-0) than in low thermo-responsive cultivars (e.g. cv. Dja-1, cv. El-0 and cv. Kon).

The protein resides in the cell membrane. In terms of biological role, provide a mechanistic link between auxin and plasma membrane H(+)-ATPases (PM H(+)-ATPases, e.g. AHA1 and AHA2), and triggers PM H(+)-ATPases activity by promoting phosphorylation of their C-terminal autoinhibitory domain as a result of PP2C-D subfamily of type 2C phosphatases inhibition, thus leading to the acidification of the apoplast and the facilitation of solutes and water uptake to drive cell expansion. Functions as a positive effectors of cell expansion through modulation of auxin transport. Involved in thermo-responsiveness of plant architecture. Enhances plasma membrane H(+)-ATPase. Probably involved in light intensity mediated root development. The protein is Auxin-responsive protein SAUR26 of Arabidopsis thaliana (Mouse-ear cress).